Consider the following 1262-residue polypeptide: Isoleucine--tRNA ligase, cytoplasmic (1262 aa).

Methionine 1 bears the N-acetylmethionine mark. The 'HIGH' region motif lies at 48-58 (PFATGLPHYGH). Residues 600 to 604 (KMSKR) carry the 'KMSKS' region motif. Lysine 603 lines the ATP pocket. Serine 1047 and serine 1049 each carry phosphoserine. Residue threonine 1058 is modified to Phosphothreonine.

It belongs to the class-I aminoacyl-tRNA synthetase family. In terms of assembly, part of a multisubunit complex that groups tRNA ligases for Arg (RARS1), Asp (DARS1), Gln (QARS1), Ile (IARS1), Leu (LARS1), Lys (KARS1), Met (MARS1) the bifunctional ligase for Glu and Pro (EPRS1) and the auxiliary subunits AIMP1/p43, AIMP2/p38 and EEF1E1/p18. Expressed in liver and muscle (at protein level).

Its subcellular location is the cytoplasm. It is found in the cytosol. It catalyses the reaction tRNA(Ile) + L-isoleucine + ATP = L-isoleucyl-tRNA(Ile) + AMP + diphosphate. In terms of biological role, catalyzes the specific attachment of an amino acid to its cognate tRNA in a 2 step reaction: the amino acid (AA) is first activated by ATP to form AA-AMP and then transferred to the acceptor end of the tRNA. In Homo sapiens (Human), this protein is Isoleucine--tRNA ligase, cytoplasmic.